The following is a 105-amino-acid chain: PTS system lactose-specific EIIA component (105 aa).

In terms of domain architecture, PTS EIIA type-3 spans 4 to 102 (EEMTLLGFEI…IHHLIELYKR (99 aa)). The active-site Tele-phosphohistidine intermediate is histidine 78. Residue histidine 78 is modified to Phosphohistidine; by HPr. Aspartate 81 serves as a coordination point for Mg(2+).

In terms of assembly, homotrimer. It depends on Mg(2+) as a cofactor.

The protein localises to the cytoplasm. The phosphoenolpyruvate-dependent sugar phosphotransferase system (sugar PTS), a major carbohydrate active transport system, catalyzes the phosphorylation of incoming sugar substrates concomitantly with their translocation across the cell membrane. The enzyme II LacEF PTS system is involved in lactose transport. This chain is PTS system lactose-specific EIIA component, found in Lactococcus lactis subsp. lactis (Streptococcus lactis).